The chain runs to 307 residues: Ubiquitin recognition factor in ER-associated degradation protein 1 (307 aa).

Position 1 is an N-acetylmethionine (methionine 1). A phosphoserine mark is found at serine 129, serine 231, serine 245, serine 247, and serine 299. Disordered stretches follow at residues serine 231–arginine 256 and glycine 288–proline 307.

This sequence belongs to the UFD1 family. As to quaternary structure, heterodimer with NPLOC4, this heterodimer binds VCP and inhibits Golgi membrane fusion. Interacts with USP13. Interacts with ZFAND2B; probably through VCP. As to expression, found in adult heart, skeletal muscle and pancreas, and in fetal liver and kidney.

Its subcellular location is the nucleus. It is found in the cytoplasm. The protein localises to the cytosol. It functions in the pathway protein degradation; proteasomal ubiquitin-dependent pathway. Essential component of the ubiquitin-dependent proteolytic pathway which degrades ubiquitin fusion proteins. The ternary complex containing UFD1, VCP and NPLOC4 binds ubiquitinated proteins and is necessary for the export of misfolded proteins from the ER to the cytoplasm, where they are degraded by the proteasome. The NPLOC4-UFD1-VCP complex regulates spindle disassembly at the end of mitosis and is necessary for the formation of a closed nuclear envelope. It may be involved in the development of some ectoderm-derived structures. Acts as a negative regulator of type I interferon production via the complex formed with VCP and NPLOC4, which binds to RIGI and recruits RNF125 to promote ubiquitination and degradation of RIGI. The sequence is that of Ubiquitin recognition factor in ER-associated degradation protein 1 from Homo sapiens (Human).